The primary structure comprises 402 residues: Probable 2,3-bisphosphoglycerate-independent phosphoglycerate mutase (402 aa).

Belongs to the BPG-independent phosphoglycerate mutase family. A-PGAM subfamily.

The enzyme catalyses (2R)-2-phosphoglycerate = (2R)-3-phosphoglycerate. It functions in the pathway carbohydrate degradation; glycolysis; pyruvate from D-glyceraldehyde 3-phosphate: step 3/5. Functionally, catalyzes the interconversion of 2-phosphoglycerate and 3-phosphoglycerate. The protein is Probable 2,3-bisphosphoglycerate-independent phosphoglycerate mutase of Thermosipho melanesiensis (strain DSM 12029 / CIP 104789 / BI429).